Here is a 165-residue protein sequence, read N- to C-terminus: Transcription antitermination protein NusB (165 aa).

The tract at residues 1–27 (MISDDTDQFNPRDAKSPEIAKGKSAKR) is disordered. The segment covering 10–21 (NPRDAKSPEIAK) has biased composition (basic and acidic residues).

It belongs to the NusB family.

Involved in transcription antitermination. Required for transcription of ribosomal RNA (rRNA) genes. Binds specifically to the boxA antiterminator sequence of the ribosomal RNA (rrn) operons. The sequence is that of Transcription antitermination protein NusB from Pseudomonas syringae pv. tomato (strain ATCC BAA-871 / DC3000).